The primary structure comprises 463 residues: ATP-dependent protease ATPase subunit HslU (463 aa).

Residues Val21, 63–68 (GVGKTE), Asp276, Glu341, and Arg413 each bind ATP.

Belongs to the ClpX chaperone family. HslU subfamily. In terms of assembly, a double ring-shaped homohexamer of HslV is capped on each side by a ring-shaped HslU homohexamer. The assembly of the HslU/HslV complex is dependent on binding of ATP.

The protein localises to the cytoplasm. Functionally, ATPase subunit of a proteasome-like degradation complex; this subunit has chaperone activity. The binding of ATP and its subsequent hydrolysis by HslU are essential for unfolding of protein substrates subsequently hydrolyzed by HslV. HslU recognizes the N-terminal part of its protein substrates and unfolds these before they are guided to HslV for hydrolysis. The sequence is that of ATP-dependent protease ATPase subunit HslU from Thermotoga neapolitana (strain ATCC 49049 / DSM 4359 / NBRC 107923 / NS-E).